The primary structure comprises 125 residues: Apolipoprotein C-IV (125 aa).

The N-terminal stretch at 1–27 (MSLLRHSLQALPALCLCVLVLACIGAC) is a signal peptide.

It belongs to the apolipoprotein C4 family.

Its subcellular location is the secreted. Its function is as follows. May participate in lipoprotein metabolism. This Ateles geoffroyi (Black-handed spider monkey) protein is Apolipoprotein C-IV (APOC4).